The chain runs to 379 residues: Flagellin A (379 aa).

Coiled-coil stretches lie at residues 103 to 128 (TNSA…RIAE) and 302 to 341 (YVDS…IKDT).

This sequence belongs to the bacterial flagellin family. Heteromer of multiple flagellin subunits including FlaA, FlaB, FlaC, FlaD and possibly FlaE.

It localises to the secreted. It is found in the bacterial flagellum. Functionally, flagellin is the subunit protein which polymerizes to form the filaments of bacterial flagella. FlaA is essential for flagellar synthesis and full motility. Important for virulence at two different levels: is needed for crossing the fish integument and may play a role once the bacterium has entered the host. This Vibrio anguillarum (Listonella anguillarum) protein is Flagellin A (flaA).